The following is a 314-amino-acid chain: Ecto-ADP-ribosyltransferase 4 (314 aa).

An N-terminal signal peptide occupies residues 1 to 46 (MGPLINRCKKILLPTTVPPATMRIWLLGGPLPFLLLLSGLQRPTEG). Intrachain disulfides connect C69/C280 and C182/C231. The TR mART core domain maps to 91–276 (KNYFRMWQKA…LQLRSTGNLS (186 aa)). The N-linked (GlcNAc...) asparagine glycan is linked to N114. Position 126 (Y126) interacts with NAD(+). N-linked (GlcNAc...) asparagine glycosylation is present at N178. Q206 serves as a coordination point for NAD(+). N222 carries N-linked (GlcNAc...) asparagine glycosylation. NAD(+) is bound at residue S240. Residues N257 and N274 are each glycosylated (N-linked (GlcNAc...) asparagine). A285 is lipidated: GPI-anchor amidated alanine. Residues 286-314 (SSKKCIPDPIAIASLSFLTSVIIFSKSRV) constitute a propeptide, removed in mature form.

The protein belongs to the Arg-specific ADP-ribosyltransferase family.

The protein localises to the cell membrane. The catalysed reaction is L-arginyl-[protein] + NAD(+) = N(omega)-(ADP-D-ribosyl)-L-arginyl-[protein] + nicotinamide + H(+). The protein is Ecto-ADP-ribosyltransferase 4 (ART4) of Pan troglodytes (Chimpanzee).